A 423-amino-acid polypeptide reads, in one-letter code: Imidazolonepropionase (423 aa).

Residues H78 and H80 each contribute to the Fe(3+) site. Zn(2+) contacts are provided by H78 and H80. 4-imidazolone-5-propanoate-binding residues include R87, Y150, and H183. Y150 is a binding site for N-formimidoyl-L-glutamate. Residue H247 participates in Fe(3+) binding. Position 247 (H247) interacts with Zn(2+). 4-imidazolone-5-propanoate is bound at residue E250. Position 322 (D322) interacts with Fe(3+). D322 is a Zn(2+) binding site. N-formimidoyl-L-glutamate-binding residues include N324 and G326. S327 contacts 4-imidazolone-5-propanoate.

It belongs to the metallo-dependent hydrolases superfamily. HutI family. Zn(2+) is required as a cofactor. Requires Fe(3+) as cofactor.

The protein localises to the cytoplasm. The enzyme catalyses 4-imidazolone-5-propanoate + H2O = N-formimidoyl-L-glutamate. The protein operates within amino-acid degradation; L-histidine degradation into L-glutamate; N-formimidoyl-L-glutamate from L-histidine: step 3/3. Functionally, catalyzes the hydrolytic cleavage of the carbon-nitrogen bond in imidazolone-5-propanoate to yield N-formimidoyl-L-glutamate. It is the third step in the universal histidine degradation pathway. The polypeptide is Imidazolonepropionase (Bacillus cereus (strain B4264)).